Reading from the N-terminus, the 340-residue chain is Very-long-chain 3-oxoacyl-CoA reductase (340 aa).

A helical transmembrane segment spans residues 23–43; it reads LQYTFAALGALYVLRGALSFV. NADP(+)-binding residues include valine 68, arginine 109, aspartate 123, aspartate 131, asparagine 150, lysine 185, tyrosine 217, lysine 221, valine 250, and threonine 252. Tyrosine 217 acts as the Proton donor in catalysis. The active-site Lowers pKa of active site Tyr is the lysine 221.

The protein belongs to the short-chain dehydrogenases/reductases (SDR) family.

The protein resides in the endoplasmic reticulum membrane. It catalyses the reaction a very-long-chain (3R)-3-hydroxyacyl-CoA + NADP(+) = a very-long-chain 3-oxoacyl-CoA + NADPH + H(+). It participates in lipid metabolism; fatty acid biosynthesis. Component of the microsomal membrane bound fatty acid elongation system, which produces the 26-carbon very long-chain fatty acids (VLCFA) from palmitate. Catalyzes the reduction of the 3-ketoacyl-CoA intermediate that is formed in each cycle of fatty acid elongation. VLCFAs serve as precursors for ceramide and sphingolipids. In Podospora anserina (strain S / ATCC MYA-4624 / DSM 980 / FGSC 10383) (Pleurage anserina), this protein is Very-long-chain 3-oxoacyl-CoA reductase.